The sequence spans 494 residues: Cytochrome c-552 (494 aa).

The first 31 residues, Met-1–Val-31, serve as a signal peptide directing secretion. His-116 provides a ligand contact to heme c. Heme contacts are provided by Cys-144, Cys-147, and Lys-148. Positions 182, 185, 186, 224, 227, and 228 each coordinate heme c. 4 residues coordinate Ca(2+): Glu-230, Tyr-231, Lys-276, and Gln-278. Tyr-231 contacts substrate. His-279 contributes to the substrate binding site. Heme c contacts are provided by His-290, Cys-297, Cys-300, His-301, His-315, Cys-328, Cys-331, His-332, and His-407.

The protein belongs to the cytochrome c-552 family. The cofactor is Ca(2+). It depends on heme c as a cofactor.

The protein resides in the periplasm. The enzyme catalyses 6 Fe(III)-[cytochrome c] + NH4(+) + 2 H2O = 6 Fe(II)-[cytochrome c] + nitrite + 8 H(+). The protein operates within nitrogen metabolism; nitrate reduction (assimilation). Catalyzes the reduction of nitrite to ammonia, consuming six electrons in the process. The chain is Cytochrome c-552 from Parabacteroides distasonis (strain ATCC 8503 / DSM 20701 / CIP 104284 / JCM 5825 / NCTC 11152).